The sequence spans 264 residues: 3-methyl-2-oxobutanoate hydroxymethyltransferase (264 aa).

Mg(2+)-binding residues include D45 and D84. Residues 45-46 (DS), D84, and K112 each bind 3-methyl-2-oxobutanoate. A Mg(2+)-binding site is contributed by E114. Catalysis depends on E181, which acts as the Proton acceptor.

Belongs to the PanB family. In terms of assembly, homodecamer; pentamer of dimers. Requires Mg(2+) as cofactor.

It is found in the cytoplasm. The enzyme catalyses 3-methyl-2-oxobutanoate + (6R)-5,10-methylene-5,6,7,8-tetrahydrofolate + H2O = 2-dehydropantoate + (6S)-5,6,7,8-tetrahydrofolate. It participates in cofactor biosynthesis; (R)-pantothenate biosynthesis; (R)-pantoate from 3-methyl-2-oxobutanoate: step 1/2. In terms of biological role, catalyzes the reversible reaction in which hydroxymethyl group from 5,10-methylenetetrahydrofolate is transferred onto alpha-ketoisovalerate to form ketopantoate. The protein is 3-methyl-2-oxobutanoate hydroxymethyltransferase of Vibrio parahaemolyticus serotype O3:K6 (strain RIMD 2210633).